Consider the following 228-residue polypeptide: Phosphatidylserine decarboxylase proenzyme (228 aa).

The active-site Schiff-base intermediate with substrate; via pyruvic acid is serine 197. Serine 197 is subject to Pyruvic acid (Ser); by autocatalysis.

This sequence belongs to the phosphatidylserine decarboxylase family. PSD-A subfamily. Heterodimer of a large membrane-associated beta subunit and a small pyruvoyl-containing alpha subunit. Pyruvate is required as a cofactor. Is synthesized initially as an inactive proenzyme. Formation of the active enzyme involves a self-maturation process in which the active site pyruvoyl group is generated from an internal serine residue via an autocatalytic post-translational modification. Two non-identical subunits are generated from the proenzyme in this reaction, and the pyruvate is formed at the N-terminus of the alpha chain, which is derived from the carboxyl end of the proenzyme. The post-translation cleavage follows an unusual pathway, termed non-hydrolytic serinolysis, in which the side chain hydroxyl group of the serine supplies its oxygen atom to form the C-terminus of the beta chain, while the remainder of the serine residue undergoes an oxidative deamination to produce ammonia and the pyruvoyl prosthetic group on the alpha chain.

It is found in the cell membrane. It catalyses the reaction a 1,2-diacyl-sn-glycero-3-phospho-L-serine + H(+) = a 1,2-diacyl-sn-glycero-3-phosphoethanolamine + CO2. It participates in phospholipid metabolism; phosphatidylethanolamine biosynthesis; phosphatidylethanolamine from CDP-diacylglycerol: step 2/2. Its function is as follows. Catalyzes the formation of phosphatidylethanolamine (PtdEtn) from phosphatidylserine (PtdSer). The protein is Phosphatidylserine decarboxylase proenzyme of Bacteroides fragilis (strain ATCC 25285 / DSM 2151 / CCUG 4856 / JCM 11019 / LMG 10263 / NCTC 9343 / Onslow / VPI 2553 / EN-2).